The sequence spans 229 residues: Uracil-DNA glycosylase (229 aa).

Residue Asp72 is the Proton acceptor of the active site.

The protein belongs to the uracil-DNA glycosylase (UDG) superfamily. UNG family.

It localises to the cytoplasm. It carries out the reaction Hydrolyzes single-stranded DNA or mismatched double-stranded DNA and polynucleotides, releasing free uracil.. Its function is as follows. Excises uracil residues from the DNA which can arise as a result of misincorporation of dUMP residues by DNA polymerase or due to deamination of cytosine. The polypeptide is Uracil-DNA glycosylase (Dichelobacter nodosus (strain VCS1703A)).